Reading from the N-terminus, the 242-residue chain is Probable 2-phosphosulfolactate phosphatase (242 aa).

This sequence belongs to the ComB family. The cofactor is Mg(2+).

The catalysed reaction is (2R)-O-phospho-3-sulfolactate + H2O = (2R)-3-sulfolactate + phosphate. This chain is Probable 2-phosphosulfolactate phosphatase, found in Parasynechococcus marenigrum (strain WH8102).